Consider the following 318-residue polypeptide: MASHYEMFPAVVTRVEQLTPLIKRFTFKRQDGQNFPRFSGGSHIIVKMNEQLSNAYSLMSCTQDLSTYQVCVRKDVEGKGGSVFMHDQCNEGCEIQISEPKNLFPLAETGNKHILIAGGIGITPFLPQMDELAARGAEYELHYAYRSPEHAALLDELTQKHAGHVFSYVDSEGSMLNLDELISSQPKGTHVYVCGPKPMIDAVIDCCNKHRYRDEYIHWEQFASTVPEDGEAFTVVLAKSNQEIEVQSNQTILQAIETLNIDVECLCREGVCGTCETAILEGEAEHFDQYLSDAEKASQKSMMICVSRAKGKKLVLDL.

Residues 5–107 (YEMFPAVVTR…SEPKNLFPLA (103 aa)) form the FAD-binding FR-type domain. The 86-residue stretch at 233-318 (FTVVLAKSNQ…AKGKKLVLDL (86 aa)) folds into the 2Fe-2S ferredoxin-type domain. [2Fe-2S] cluster-binding residues include Cys-267, Cys-272, Cys-275, and Cys-305.

It belongs to the PDR/VanB family. CntB subfamily. In terms of assembly, composed of an oxygenase subunit (cntA) and a reductase subunit (cntB). FMN serves as cofactor. It depends on [2Fe-2S] cluster as a cofactor.

The catalysed reaction is (R)-carnitine + NADH + O2 + H(+) = (3R)-3-hydroxy-4-oxobutanoate + trimethylamine + NAD(+) + H2O. The enzyme catalyses (R)-carnitine + NADPH + O2 + H(+) = (3R)-3-hydroxy-4-oxobutanoate + trimethylamine + NADP(+) + H2O. It functions in the pathway amine and polyamine metabolism; carnitine metabolism. Functionally, converts carnitine to trimethylamine and malic semialdehyde. The polypeptide is Carnitine monooxygenase reductase subunit (Acinetobacter baumannii (strain ATCC 19606 / DSM 30007 / JCM 6841 / CCUG 19606 / CIP 70.34 / NBRC 109757 / NCIMB 12457 / NCTC 12156 / 81)).